A 173-amino-acid polypeptide reads, in one-letter code: MNNKKDYYLPFLLTAIVIVVDQVTKILVVQYMSVNEVIPVIGDLVNLRFVYNTGAAFSLGAGFGEIARKILLVFLPFLLLIALTGAYLKSAELTRAQRWFICGILGGGFGNLIDRFFRSEGVVDFIDVKFFGILGMERWPTFNAADSFIVCCGIGLGVNLILQGIKQKKLKDS.

3 helical membrane-spanning segments follow: residues 9–29 (LPFL…ILVV), 37–57 (VIPV…GAAF), and 70–90 (ILLV…YLKS). Catalysis depends on residues D124 and D146. Residues 142-162 (FNAADSFIVCCGIGLGVNLIL) traverse the membrane as a helical segment.

It belongs to the peptidase A8 family.

Its subcellular location is the cell inner membrane. The catalysed reaction is Release of signal peptides from bacterial membrane prolipoproteins. Hydrolyzes -Xaa-Yaa-Zaa-|-(S,diacylglyceryl)Cys-, in which Xaa is hydrophobic (preferably Leu), and Yaa (Ala or Ser) and Zaa (Gly or Ala) have small, neutral side chains.. Its pathway is protein modification; lipoprotein biosynthesis (signal peptide cleavage). In terms of biological role, this protein specifically catalyzes the removal of signal peptides from prolipoproteins. This Treponema denticola (strain ATCC 35405 / DSM 14222 / CIP 103919 / JCM 8153 / KCTC 15104) protein is Lipoprotein signal peptidase.